Here is a 369-residue protein sequence, read N- to C-terminus: Anhydro-N-acetylmuramic acid kinase (369 aa).

12–19 (GTSMDGVD) contributes to the ATP binding site.

It belongs to the anhydro-N-acetylmuramic acid kinase family.

It catalyses the reaction 1,6-anhydro-N-acetyl-beta-muramate + ATP + H2O = N-acetyl-D-muramate 6-phosphate + ADP + H(+). It participates in amino-sugar metabolism; 1,6-anhydro-N-acetylmuramate degradation. The protein operates within cell wall biogenesis; peptidoglycan recycling. In terms of biological role, catalyzes the specific phosphorylation of 1,6-anhydro-N-acetylmuramic acid (anhMurNAc) with the simultaneous cleavage of the 1,6-anhydro ring, generating MurNAc-6-P. Is required for the utilization of anhMurNAc either imported from the medium or derived from its own cell wall murein, and thus plays a role in cell wall recycling. The chain is Anhydro-N-acetylmuramic acid kinase from Shewanella oneidensis (strain ATCC 700550 / JCM 31522 / CIP 106686 / LMG 19005 / NCIMB 14063 / MR-1).